The following is a 253-amino-acid chain: Imidazole glycerol phosphate synthase subunit HisF (253 aa).

Residues Asp-11 and Asp-130 contribute to the active site.

This sequence belongs to the HisA/HisF family. Heterodimer of HisH and HisF.

The protein resides in the cytoplasm. It carries out the reaction 5-[(5-phospho-1-deoxy-D-ribulos-1-ylimino)methylamino]-1-(5-phospho-beta-D-ribosyl)imidazole-4-carboxamide + L-glutamine = D-erythro-1-(imidazol-4-yl)glycerol 3-phosphate + 5-amino-1-(5-phospho-beta-D-ribosyl)imidazole-4-carboxamide + L-glutamate + H(+). It participates in amino-acid biosynthesis; L-histidine biosynthesis; L-histidine from 5-phospho-alpha-D-ribose 1-diphosphate: step 5/9. Its function is as follows. IGPS catalyzes the conversion of PRFAR and glutamine to IGP, AICAR and glutamate. The HisF subunit catalyzes the cyclization activity that produces IGP and AICAR from PRFAR using the ammonia provided by the HisH subunit. The sequence is that of Imidazole glycerol phosphate synthase subunit HisF from Cereibacter sphaeroides (strain ATCC 17025 / ATH 2.4.3) (Rhodobacter sphaeroides).